Reading from the N-terminus, the 94-residue chain is uncharacterized protein (94 aa).

The interval 1 to 22 (MATLQQAQQQNNQLTQQNNQLT) is disordered. The stretch at 1–77 (MATLQQAQQQ…NRLHSENHRL (77 aa)) forms a coiled coil.

This is an uncharacterized protein from Acheta domesticus (House cricket).